Reading from the N-terminus, the 378-residue chain is Ribosomal RNA large subunit methyltransferase G (378 aa).

The protein belongs to the methyltransferase superfamily. RlmG family.

The protein localises to the cytoplasm. The catalysed reaction is guanosine(1835) in 23S rRNA + S-adenosyl-L-methionine = N(2)-methylguanosine(1835) in 23S rRNA + S-adenosyl-L-homocysteine + H(+). Functionally, specifically methylates the guanine in position 1835 (m2G1835) of 23S rRNA. The protein is Ribosomal RNA large subunit methyltransferase G of Salmonella gallinarum (strain 287/91 / NCTC 13346).